The chain runs to 379 residues: Cytochrome b (379 aa).

The next 4 membrane-spanning stretches (helical) occupy residues 33 to 53, 77 to 98, 113 to 133, and 178 to 198; these read FGSL…FLAM, WMIR…FMHV, WNIG…GYVL, and FFAF…VHLL. Heme b is bound by residues His83 and His97. Residues His182 and His196 each contribute to the heme b site. His201 provides a ligand contact to a ubiquinone. The next 4 membrane-spanning stretches (helical) occupy residues 226-246, 288-308, 320-340, and 347-367; these read IKDI…VLFS, LGGV…PMLH, LSQC…WIGG, and FITI…XLMP.

Belongs to the cytochrome b family. The cytochrome bc1 complex contains 11 subunits: 3 respiratory subunits (MT-CYB, CYC1 and UQCRFS1), 2 core proteins (UQCRC1 and UQCRC2) and 6 low-molecular weight proteins (UQCRH/QCR6, UQCRB/QCR7, UQCRQ/QCR8, UQCR10/QCR9, UQCR11/QCR10 and a cleavage product of UQCRFS1). This cytochrome bc1 complex then forms a dimer. It depends on heme b as a cofactor.

It localises to the mitochondrion inner membrane. In terms of biological role, component of the ubiquinol-cytochrome c reductase complex (complex III or cytochrome b-c1 complex) that is part of the mitochondrial respiratory chain. The b-c1 complex mediates electron transfer from ubiquinol to cytochrome c. Contributes to the generation of a proton gradient across the mitochondrial membrane that is then used for ATP synthesis. The polypeptide is Cytochrome b (MT-CYB) (Chrotogale owstoni (Owston's palm civet)).